Consider the following 537-residue polypeptide: Eukaryotic translation initiation factor 3 subunit L (537 aa).

Over residues 1 to 19 (MSRRVEFDLSTEDHSDRRR) the composition is skewed to basic and acidic residues. Positions 1 to 30 (MSRRVEFDLSTEDHSDRRRTNTFSSSADED) are disordered. Residues 299–487 (EATKMFVNCL…GPSSADDDEP (189 aa)) form the PCI domain.

It belongs to the eIF-3 subunit L family. As to quaternary structure, component of the eukaryotic translation initiation factor 3 (eIF-3) complex.

The protein resides in the cytoplasm. Functionally, component of the eukaryotic translation initiation factor 3 (eIF-3) complex, which is involved in protein synthesis of a specialized repertoire of mRNAs and, together with other initiation factors, stimulates binding of mRNA and methionyl-tRNAi to the 40S ribosome. The eIF-3 complex specifically targets and initiates translation of a subset of mRNAs involved in cell proliferation. The sequence is that of Eukaryotic translation initiation factor 3 subunit L from Caenorhabditis elegans.